Reading from the N-terminus, the 197-residue chain is Recombination protein RecR (197 aa).

The C4-type zinc-finger motif lies at 56–71 (CVRCFSLTDAETCNFC). Residues 79–174 (RVLCVVETFA…RVTRIAQGLP (96 aa)) form the Toprim domain.

It belongs to the RecR family.

In terms of biological role, may play a role in DNA repair. It seems to be involved in an RecBC-independent recombinational process of DNA repair. It may act with RecF and RecO. In Myxococcus xanthus (strain DK1622), this protein is Recombination protein RecR.